The sequence spans 260 residues: Activator of 90 kDa heat shock protein ATPase homolog 2 (260 aa).

The protein belongs to the AHA1 family.

Its function is as follows. Co-chaperone that stimulates HSP90 ATPase activity. This is Activator of 90 kDa heat shock protein ATPase homolog 2 (AHSA2) from Bos taurus (Bovine).